A 371-amino-acid polypeptide reads, in one-letter code: Queuine tRNA-ribosyltransferase (371 aa).

The active-site Proton acceptor is the aspartate 89. Residues 89–93, aspartate 143, glutamine 185, and glycine 212 each bind substrate; that span reads DSGGF. The interval 243-249 is RNA binding; sequence GVGKPED. Residue aspartate 262 is the Nucleophile of the active site. Residues 267–271 form an RNA binding; important for wobble base 34 recognition region; the sequence is TRNAR. Positions 300, 302, 305, and 331 each coordinate Zn(2+).

Belongs to the queuine tRNA-ribosyltransferase family. Homodimer. Within each dimer, one monomer is responsible for RNA recognition and catalysis, while the other monomer binds to the replacement base PreQ1. Requires Zn(2+) as cofactor.

The enzyme catalyses 7-aminomethyl-7-carbaguanine + guanosine(34) in tRNA = 7-aminomethyl-7-carbaguanosine(34) in tRNA + guanine. The protein operates within tRNA modification; tRNA-queuosine biosynthesis. In terms of biological role, catalyzes the base-exchange of a guanine (G) residue with the queuine precursor 7-aminomethyl-7-deazaguanine (PreQ1) at position 34 (anticodon wobble position) in tRNAs with GU(N) anticodons (tRNA-Asp, -Asn, -His and -Tyr). Catalysis occurs through a double-displacement mechanism. The nucleophile active site attacks the C1' of nucleotide 34 to detach the guanine base from the RNA, forming a covalent enzyme-RNA intermediate. The proton acceptor active site deprotonates the incoming PreQ1, allowing a nucleophilic attack on the C1' of the ribose to form the product. After dissociation, two additional enzymatic reactions on the tRNA convert PreQ1 to queuine (Q), resulting in the hypermodified nucleoside queuosine (7-(((4,5-cis-dihydroxy-2-cyclopenten-1-yl)amino)methyl)-7-deazaguanosine). This is Queuine tRNA-ribosyltransferase from Thioalkalivibrio sulfidiphilus (strain HL-EbGR7).